The chain runs to 247 residues: ATP synthase subunit a, chloroplastic (247 aa).

The next 5 membrane-spanning stretches (helical) occupy residues 38–58 (QVLITSWVVIAILLGSATIAV), 95–115 (VPFIGTMFLFIFVSNWSGALL), 134–154 (INTTVALALLTSVAYFYAGLT), 199–219 (LVVVVLVSLVPLVVPIPVMLL), and 220–240 (GLFTSGIQALIFATLAAAYIG).

Belongs to the ATPase A chain family. F-type ATPases have 2 components, CF(1) - the catalytic core - and CF(0) - the membrane proton channel. CF(1) has five subunits: alpha(3), beta(3), gamma(1), delta(1), epsilon(1). CF(0) has four main subunits: a, b, b' and c.

It is found in the plastid. Its subcellular location is the chloroplast thylakoid membrane. Functionally, key component of the proton channel; it plays a direct role in the translocation of protons across the membrane. This chain is ATP synthase subunit a, chloroplastic, found in Solanum lycopersicum (Tomato).